Consider the following 180-residue polypeptide: Crossover junction endodeoxyribonuclease RuvC (180 aa).

Residues aspartate 7, glutamate 66, and aspartate 138 contribute to the active site. The Mg(2+) site is built by aspartate 7, glutamate 66, and aspartate 138.

The protein belongs to the RuvC family. As to quaternary structure, homodimer which binds Holliday junction (HJ) DNA. The HJ becomes 2-fold symmetrical on binding to RuvC with unstacked arms; it has a different conformation from HJ DNA in complex with RuvA. In the full resolvosome a probable DNA-RuvA(4)-RuvB(12)-RuvC(2) complex forms which resolves the HJ. Mg(2+) serves as cofactor.

Its subcellular location is the cytoplasm. It catalyses the reaction Endonucleolytic cleavage at a junction such as a reciprocal single-stranded crossover between two homologous DNA duplexes (Holliday junction).. The RuvA-RuvB-RuvC complex processes Holliday junction (HJ) DNA during genetic recombination and DNA repair. Endonuclease that resolves HJ intermediates. Cleaves cruciform DNA by making single-stranded nicks across the HJ at symmetrical positions within the homologous arms, yielding a 5'-phosphate and a 3'-hydroxyl group; requires a central core of homology in the junction. The consensus cleavage sequence is 5'-(A/T)TT(C/G)-3'. Cleavage occurs on the 3'-side of the TT dinucleotide at the point of strand exchange. HJ branch migration catalyzed by RuvA-RuvB allows RuvC to scan DNA until it finds its consensus sequence, where it cleaves and resolves the cruciform DNA. This is Crossover junction endodeoxyribonuclease RuvC from Paraburkholderia xenovorans (strain LB400).